Consider the following 257-residue polypeptide: Ribosome-recycling factor, mitochondrial (257 aa).

The protein belongs to the RRF family.

Its subcellular location is the mitochondrion. Functionally, necessary for protein synthesis in mitochondria. Functions as a ribosome recycling factor in mitochondria. This is Ribosome-recycling factor, mitochondrial (RRF1) from Debaryomyces hansenii (strain ATCC 36239 / CBS 767 / BCRC 21394 / JCM 1990 / NBRC 0083 / IGC 2968) (Yeast).